Consider the following 269-residue polypeptide: Undecaprenyl-diphosphatase (269 aa).

7 helical membrane-spanning segments follow: residues 40 to 59, 87 to 107, 116 to 136, 160 to 180, 188 to 208, 220 to 240, and 247 to 267; these read GITF…ALYF, WYII…EEPI, AIIA…DTLG, ALLP…FLGF, FSFL…VGHL, PLLI…ALLL, and SLYP…LFIF.

Belongs to the UppP family.

It localises to the cell inner membrane. The enzyme catalyses di-trans,octa-cis-undecaprenyl diphosphate + H2O = di-trans,octa-cis-undecaprenyl phosphate + phosphate + H(+). In terms of biological role, catalyzes the dephosphorylation of undecaprenyl diphosphate (UPP). Confers resistance to bacitracin. The protein is Undecaprenyl-diphosphatase of Geobacter metallireducens (strain ATCC 53774 / DSM 7210 / GS-15).